Consider the following 380-residue polypeptide: MKNEMLALILAGGQGTRLGKLTQSIAKPAVQFGGRYRIIDFALSNCANSGIHNVGVVTQYQPLALNNHIGNGSSWGLDGINSGVSILQPYSASEGNRWFEGTSHAIYQNIDYIDSVNPEYVLILSGDHIYKMDYDDMLQSHKDNNASLTVAVLDVPLKEASRFGIMNTDANNRIVEFEEKPAQPKSTKASMGIYIFDWQRLRNMLVAAEKSKVGMSDFGKNVIPNYLESGESVYAYEFSGYWKDVGTIESLWEANMEYISPENALDSRNRQWKIYSRNLISPPNFLGANAHVEDSLVVDGCFVDGTVKHSILSTGAQVREGAEVLDSVIMSGAIIGQGAKIKRAIIGEGAIISDGVEIDGTDEVQVVGYNEVVGVATDED.

Alpha-D-glucose 1-phosphate contacts are provided by residues Gly-164, Glu-179–Lys-180, and Ser-190.

Belongs to the bacterial/plant glucose-1-phosphate adenylyltransferase family. As to quaternary structure, homotetramer.

The catalysed reaction is alpha-D-glucose 1-phosphate + ATP + H(+) = ADP-alpha-D-glucose + diphosphate. It participates in glycan biosynthesis; glycogen biosynthesis. Involved in the biosynthesis of ADP-glucose, a building block required for the elongation reactions to produce glycogen. Catalyzes the reaction between ATP and alpha-D-glucose 1-phosphate (G1P) to produce pyrophosphate and ADP-Glc. This is Glucose-1-phosphate adenylyltransferase from Streptococcus pneumoniae (strain Hungary19A-6).